Reading from the N-terminus, the 142-residue chain is Nucleoside diphosphate kinase (142 aa).

Positions 11, 59, 87, 93, 104, and 114 each coordinate ATP. His-117 (pros-phosphohistidine intermediate) is an active-site residue.

This sequence belongs to the NDK family. Homotetramer. It depends on Mg(2+) as a cofactor.

The protein resides in the cytoplasm. It catalyses the reaction a 2'-deoxyribonucleoside 5'-diphosphate + ATP = a 2'-deoxyribonucleoside 5'-triphosphate + ADP. The catalysed reaction is a ribonucleoside 5'-diphosphate + ATP = a ribonucleoside 5'-triphosphate + ADP. Its function is as follows. Major role in the synthesis of nucleoside triphosphates other than ATP. The ATP gamma phosphate is transferred to the NDP beta phosphate via a ping-pong mechanism, using a phosphorylated active-site intermediate. The polypeptide is Nucleoside diphosphate kinase (Hahella chejuensis (strain KCTC 2396)).